The chain runs to 528 residues: Na(+)/H(+) antiporter NhaB (528 aa).

The next 11 membrane-spanning stretches (helical) occupy residues Phe23–Trp45, Pro66–Leu86, Val95–Tyr115, Val130–Ile164, Leu203–Pro223, Ile241–Val261, Leu310–Ile330, Glu349–Ile369, Leu390–Gly410, Ala448–Ile468, and Met475–Glu495.

It belongs to the NhaB Na(+)/H(+) (TC 2.A.34) antiporter family.

The protein localises to the cell inner membrane. The enzyme catalyses 2 Na(+)(in) + 3 H(+)(out) = 2 Na(+)(out) + 3 H(+)(in). Its function is as follows. Na(+)/H(+) antiporter that extrudes sodium in exchange for external protons. The protein is Na(+)/H(+) antiporter NhaB of Shewanella amazonensis (strain ATCC BAA-1098 / SB2B).